The following is a 793-amino-acid chain: Signal transducer and activator of transcription 5A (793 aa).

The residue at position 90 (Y90) is a Phosphotyrosine. S128 is subject to Phosphoserine. Positions 589 to 686 (WNDGAILGFV…EVFAKYYTPV (98 aa)) constitute an SH2 domain. 2 positions are modified to phosphotyrosine: Y682 and Y694. S779 carries the phosphoserine modification.

This sequence belongs to the transcription factor STAT family. As to quaternary structure, forms a homodimer or a heterodimer with a related family member. Interacts with NCOA1 and SOCS7. Binds NR3C1. Interacts with ERBB4. Interacts with EBF4. Interacts with CD69. Post-translationally, ISGylated. Tyrosine phosphorylated in response to KITLG/SCF, IL2, IL3, IL7, IL15, CSF2/GMCSF, GH1, PRL, EPO and THPO. Activated KIT promotes phosphorylation on tyrosine residues and subsequent translocation to the nucleus. Tyrosine phosphorylated in response to constitutively activated FGFR1, FGFR2, FGFR3 and FGFR4. Tyrosine phosphorylation is required for DNA-binding activity and dimerization. Serine phosphorylation is also required for maximal transcriptional activity. Tyrosine phosphorylated in response to signaling via activated FLT3; wild-type FLT3 results in much weaker phosphorylation than constitutively activated mutant FLT3. Alternatively, can be phosphorylated by JAK2 at Tyr-694. In the virgin, found in most tissues except brain and muscle. During lactation, abundantly found in mammary tissue, as well as in other secretory organs such as salivary gland and seminal vesicle.

It is found in the cytoplasm. It localises to the nucleus. Its function is as follows. Carries out a dual function: signal transduction and activation of transcription. Mediates cellular responses to the cytokine KITLG/SCF and other growth factors. May mediate cellular responses to activated FGFR1, FGFR2, FGFR3 and FGFR4. Binds to the GAS element and activates PRL-induced transcription. Regulates the expression of milk proteins during lactation. The sequence is that of Signal transducer and activator of transcription 5A (Stat5a) from Mus musculus (Mouse).